Reading from the N-terminus, the 188-residue chain is MSIKSDKWIRRMAESTGMIEPFEPGQIREADGKKIISYGTSSYGYDIRCAPEFKVFTNIHSTVVDPKNFDEKSFVDFHGDSCIIPPNSFALARTLEYFRIPRNVLTICLGKSTYARCGIIVNVTPFEPEWEGYVTLEFSNTTPLPAKIYAGEGCAQVLFFESDEVCETSYKDRGGKYQGQQGVTLPKA.

DCTP is bound by residues 111 to 116 (KSTYAR), 135 to 137 (TLE), Gln-156, Tyr-170, and Gln-180. Residue Glu-137 is the Proton donor/acceptor of the active site.

Belongs to the dCTP deaminase family. Homotrimer.

The catalysed reaction is dCTP + H2O + H(+) = dUTP + NH4(+). The protein operates within pyrimidine metabolism; dUMP biosynthesis; dUMP from dCTP (dUTP route): step 1/2. Its function is as follows. Catalyzes the deamination of dCTP to dUTP. The polypeptide is dCTP deaminase (Polaromonas sp. (strain JS666 / ATCC BAA-500)).